The sequence spans 393 residues: Lipid-A-disaccharide synthase (393 aa).

The protein belongs to the LpxB family.

The enzyme catalyses a lipid X + a UDP-2-N,3-O-bis[(3R)-3-hydroxyacyl]-alpha-D-glucosamine = a lipid A disaccharide + UDP + H(+). The protein operates within bacterial outer membrane biogenesis; LPS lipid A biosynthesis. Condensation of UDP-2,3-diacylglucosamine and 2,3-diacylglucosamine-1-phosphate to form lipid A disaccharide, a precursor of lipid A, a phosphorylated glycolipid that anchors the lipopolysaccharide to the outer membrane of the cell. The sequence is that of Lipid-A-disaccharide synthase from Colwellia psychrerythraea (strain 34H / ATCC BAA-681) (Vibrio psychroerythus).